A 526-amino-acid polypeptide reads, in one-letter code: Catalase (526 aa).

A compositionally biased stretch (basic and acidic residues) spans 1 to 22 (MADDREKSTDQMKLWKEGRGSQ). The segment at 1–29 (MADDREKSTDQMKLWKEGRGSQRPDVLTT) is disordered. Catalysis depends on residues His75 and Asn148. 8 residues coordinate NADP(+): His194, Ser201, Arg203, Asn213, Lys237, Trp303, His305, and Lys306. Tyr358 contacts heme.

This sequence belongs to the catalase family. Homotetramer. Heme is required as a cofactor. The cofactor is NADP(+).

The protein resides in the peroxisome matrix. It catalyses the reaction 2 H2O2 = O2 + 2 H2O. In terms of biological role, catalyzes the degradation of hydrogen peroxide (H(2)O(2)) generated by peroxisomal oxidases to water and oxygen, thereby protecting cells from the toxic effects of hydrogen peroxide. The protein is Catalase (cat) of Danio rerio (Zebrafish).